The sequence spans 236 residues: UPF0257 lipoprotein YnfC (236 aa).

A signal peptide spans 1–16; that stretch reads MKYKLLPCLLAILLTG. A lipid anchor (N-palmitoyl cysteine) is attached at Cys17. Cys17 carries the S-diacylglycerol cysteine lipid modification.

Belongs to the UPF0257 family.

It localises to the cell membrane. This is UPF0257 lipoprotein YnfC from Escherichia coli O157:H7.